The chain runs to 159 residues: Protransforming growth factor alpha (159 aa).

A signal peptide spans 1-23; it reads MVPAAGQLALLALGILVAVCQAL. A propeptide spans 24 to 38 (removed in mature form); sequence ENSTSPLSDSPVAAA. At 24 to 97 the chain is on the extracellular side; that stretch reads ENSTSPLSDS…AVVAASQKKQ (74 aa). A glycan (N-linked (GlcNAc...) asparagine) is linked at N25. One can recognise an EGF-like domain in the interval 42 to 82; it reads HFNKCPDSHTQYCFHGTCRFLVQEEKPACVCHSGYVGVRCE. Intrachain disulfides connect C46-C59, C54-C70, and C72-C81. Residues 89 to 159 constitute a propeptide, removed in mature form; it reads VVAASQKKQA…TACCHSETVV (71 aa). Residues 98 to 123 form a helical membrane-spanning segment; the sequence is AITALVVVSIVALAVLIITCVLIHCC. Residues 124 to 159 lie on the Cytoplasmic side of the membrane; sequence QVRKHCEWCRALVCRHEKPSALLKGRTACCHSETVV. 2 S-palmitoyl cysteine lipidation sites follow: C152 and C153.

Interacts with the PDZ domains of MAGI3, SDCBP and SNTA1. The interaction with SDCBP, is required for the targeting to the cell surface. In the endoplasmic reticulum, in its immature form (i.e. with a prosegment and lacking full N-glycosylation), interacts with CNIH. In the Golgi apparatus, may form a complex with CNIH and GORASP2. Interacts (via cytoplasmic C-terminal domain) with NKD2.

It is found in the secreted. The protein localises to the extracellular space. Its subcellular location is the cell membrane. TGF alpha is a mitogenic polypeptide that is able to bind to the EGF receptor/EGFR and to act synergistically with TGF beta to promote anchorage-independent cell proliferation in soft agar. The sequence is that of Protransforming growth factor alpha (Tgfa) from Rattus norvegicus (Rat).